Here is a 436-residue protein sequence, read N- to C-terminus: Probable ABC transporter binding protein NosD (436 aa).

The signal sequence occupies residues M1–A27. PbH1 repeat units lie at residues A85 to P113, A115 to G136, T137 to A166, V167 to T188, S189 to F210, S233 to Y255, S293 to A314, and S316 to D354.

This sequence belongs to the NosD family. As to quaternary structure, the complex may be composed of an ATP-binding protein (NosF), a transmembrane protein (NosY) and a solute-binding protein (NosD).

It localises to the periplasm. Functionally, required for the assembly of the copper chromophores of nitrous oxide reductase. Could be part of the ABC transporter complex NosDFY. This chain is Probable ABC transporter binding protein NosD, found in Stutzerimonas stutzeri (Pseudomonas stutzeri).